Consider the following 148-residue polypeptide: Flavodoxin (148 aa).

In terms of domain architecture, Flavodoxin-like spans 4–145; the sequence is VLIVYGSTTG…DVSAWAGRVV (142 aa).

It belongs to the flavodoxin family. Requires FMN as cofactor.

In terms of biological role, low-potential electron donor to a number of redox enzymes. This Nitratidesulfovibrio vulgaris (strain DSM 19637 / Miyazaki F) (Desulfovibrio vulgaris) protein is Flavodoxin.